We begin with the raw amino-acid sequence, 395 residues long: uncharacterized protein (395 aa).

The tract at residues 115–144 (TKPPTEGGPEKDQSSPSQTQAAPQGPSTAS) is disordered. Positions 128–141 (SSPSQTQAAPQGPS) are enriched in low complexity.

This is an uncharacterized protein from Homo sapiens (Human).